The following is a 67-amino-acid chain: DNA-directed RNA polymerase subunit omega (67 aa).

The protein belongs to the RNA polymerase subunit omega family. The RNAP catalytic core consists of 2 alpha, 1 beta, 1 beta' and 1 omega subunit. When a sigma factor is associated with the core the holoenzyme is formed, which can initiate transcription.

It catalyses the reaction RNA(n) + a ribonucleoside 5'-triphosphate = RNA(n+1) + diphosphate. Its function is as follows. Promotes RNA polymerase assembly. Latches the N- and C-terminal regions of the beta' subunit thereby facilitating its interaction with the beta and alpha subunits. This Exiguobacterium sibiricum (strain DSM 17290 / CCUG 55495 / CIP 109462 / JCM 13490 / 255-15) protein is DNA-directed RNA polymerase subunit omega.